We begin with the raw amino-acid sequence, 160 residues long: Protein CrtK (160 aa).

Transmembrane regions (helical) follow at residues 3–23 (LTLFAVYFVACACAGATGAIF), 37–57 (WVPPNWLFPVAWSTLYILMSI), 76–96 (LAFWAVQIAVNTLWTPIFFGL), 101–121 (GGMLVLVLLWLSVFATCVLFW), and 129–149 (LMFVPYVIWVTVAGALNFSVW).

It belongs to the TspO/BZRP family.

It localises to the cell inner membrane. It functions in the pathway carotenoid biosynthesis; spheroidene biosynthesis. This Rhodobacter capsulatus (strain ATCC BAA-309 / NBRC 16581 / SB1003) protein is Protein CrtK (crtK).